The following is a 131-amino-acid chain: Small ribosomal subunit protein uS8 (131 aa).

The protein belongs to the universal ribosomal protein uS8 family. As to quaternary structure, part of the 30S ribosomal subunit. Contacts proteins S5 and S12.

One of the primary rRNA binding proteins, it binds directly to 16S rRNA central domain where it helps coordinate assembly of the platform of the 30S subunit. This is Small ribosomal subunit protein uS8 from Thermodesulfovibrio yellowstonii (strain ATCC 51303 / DSM 11347 / YP87).